Reading from the N-terminus, the 284-residue chain is Urease accessory protein UreD (284 aa).

This sequence belongs to the UreD family. In terms of assembly, ureD, UreF and UreG form a complex that acts as a GTP-hydrolysis-dependent molecular chaperone, activating the urease apoprotein by helping to assemble the nickel containing metallocenter of UreC. The UreE protein probably delivers the nickel.

It is found in the cytoplasm. Required for maturation of urease via the functional incorporation of the urease nickel metallocenter. The chain is Urease accessory protein UreD from Bordetella bronchiseptica (strain ATCC BAA-588 / NCTC 13252 / RB50) (Alcaligenes bronchisepticus).